The primary structure comprises 783 residues: Zinc finger protein 107 (783 aa).

The segment at F76–H98 adopts a C2H2-type 1; atypical zinc-finger fold. 3 consecutive C2H2-type zinc fingers follow at residues F104–H126, Y132–H154, and Y160–H182. K186 participates in a covalent cross-link: Glycyl lysine isopeptide (Lys-Gly) (interchain with G-Cter in SUMO2). The C2H2-type 5 zinc finger occupies N188–H210. The C2H2-type 6; atypical zinc-finger motif lies at Y216 to H238. A C2H2-type 7 zinc finger spans residues Y244–H266. Residues Y272–H294 form a C2H2-type 8; atypical zinc finger. A C2H2-type 9; atypical zinc finger spans residues N300–L322. C2H2-type zinc fingers lie at residues Y328–H350 and Y356–H378. The C2H2-type 12; atypical zinc finger occupies Y384–Y406. 4 consecutive C2H2-type zinc fingers follow at residues Y412–H434, Y440–H462, Y468–H490, and Y496–H518. The C2H2-type 17; atypical zinc finger occupies N524–H546. The C2H2-type 18; atypical zinc-finger motif lies at Y552–H574. The C2H2-type 19; atypical zinc finger occupies Y580–Y602. 5 consecutive C2H2-type zinc fingers follow at residues H608–H630, Y636–H658, Y664–H686, Y692–H714, and Y720–H742. Residues Y748–H770 form a C2H2-type 25; atypical zinc finger.

It belongs to the krueppel C2H2-type zinc-finger protein family. As to expression, expressed in brain, heart, skeletal muscle, kidney and pancreas. Weakly expressed in aorta, liver and lung.

It localises to the nucleus. May be involved in transcriptional regulation. The polypeptide is Zinc finger protein 107 (ZNF107) (Homo sapiens (Human)).